Consider the following 335-residue polypeptide: Ferredoxin--NADP reductase (335 aa).

FAD is bound by residues Asp-34, Gln-42, Tyr-47, Ala-87, Phe-121, Asp-287, and Thr-328.

The protein belongs to the ferredoxin--NADP reductase type 2 family. As to quaternary structure, homodimer. FAD is required as a cofactor.

It carries out the reaction 2 reduced [2Fe-2S]-[ferredoxin] + NADP(+) + H(+) = 2 oxidized [2Fe-2S]-[ferredoxin] + NADPH. The protein is Ferredoxin--NADP reductase of Rickettsia felis (strain ATCC VR-1525 / URRWXCal2) (Rickettsia azadi).